A 703-amino-acid polypeptide reads, in one-letter code: FERM domain-containing protein 7 (703 aa).

Residues 2–282 (LHLKVQFLDD…EYHAFFRLSE (281 aa)) enclose the FERM domain. Residues 525–552 (RNMRIKSLQQDLQELQEAMARTSGRSNI) are a coiled coil.

In the developing cerebral cortex, strong expression is observed in the ventricular and intermediate zones at 13 and 17 dpc. At 17 dpc and P0, expression appears to be restricted to the cortical plate. In neonates, highly expressed in cortex, hippocampus, cerebellum, olfactory bulb and eye with little or no expression in liver, kidney, skeletal muscle or heart muscle (at protein level).

It is found in the cell projection. Its subcellular location is the neuron projection. The protein localises to the growth cone. Functionally, plays a role in neurite development, may be through the activation of the GTPase RAC1. Plays a role in the control of eye movement and gaze stability. The protein is FERM domain-containing protein 7 of Mus musculus (Mouse).